We begin with the raw amino-acid sequence, 930 residues long: Dual serine/threonine and tyrosine protein kinase (930 aa).

Over residues 1-14 the composition is skewed to low complexity; the sequence is MEGDGVPWGSEPVS. A disordered region spans residues 1 to 22; that stretch reads MEGDGVPWGSEPVSGPGPGGGG. Coiled-coil stretches lie at residues 190 to 216 and 396 to 432; these read EEDLEVQENNEDAAHVLAELEVTMHHA and RKKENELYESLMNIANRKQEEMKDMIVETLNTMKEEL. The Protein kinase domain maps to 653–907; the sequence is PKLGQELGRG…PLLGIVQPML (255 aa). ATP is bound by residues 659–667 and Lys-682; that span reads LGRGQYGVV. The Proton acceptor role is filled by Asp-778.

This sequence belongs to the protein kinase superfamily. Ser/Thr protein kinase family.

The protein resides in the cytoplasm. It is found in the cell membrane. The protein localises to the apical cell membrane. Its subcellular location is the basolateral cell membrane. It localises to the cell junction. It carries out the reaction L-seryl-[protein] + ATP = O-phospho-L-seryl-[protein] + ADP + H(+). The catalysed reaction is L-threonyl-[protein] + ATP = O-phospho-L-threonyl-[protein] + ADP + H(+). It catalyses the reaction L-tyrosyl-[protein] + ATP = O-phospho-L-tyrosyl-[protein] + ADP + H(+). Its function is as follows. Acts as a positive regulator of ERK phosphorylation downstream of fibroblast growth factor-receptor activation. Involved in the regulation of both caspase-dependent apoptosis and caspase-independent cell death. In the skin, it plays a predominant role in suppressing caspase-dependent apoptosis in response to UV stress in a range of dermal cell types. The sequence is that of Dual serine/threonine and tyrosine protein kinase (DSTYK) from Pan troglodytes (Chimpanzee).